We begin with the raw amino-acid sequence, 108 residues long: Large ribosomal subunit protein bL31B (108 aa).

The interval 81 to 108 is disordered; sequence KPAQPVQAPAEEGPVVKGKKKAPAKKKK. Over residues 97–108 the composition is skewed to basic residues; that stretch reads KGKKKAPAKKKK.

The protein belongs to the bacterial ribosomal protein bL31 family. Type B subfamily. Part of the 50S ribosomal subunit.

In Chlamydia caviae (strain ATCC VR-813 / DSM 19441 / 03DC25 / GPIC) (Chlamydophila caviae), this protein is Large ribosomal subunit protein bL31B.